The primary structure comprises 617 residues: Probable translation initiation factor IF-2 (617 aa).

Residues 14–231 (LRQPIVVVLG…VLAGLTQTYL (218 aa)) enclose the tr-type G domain. Residues 23–30 (GHVDHGKT) are G1. 23–30 (GHVDHGKT) provides a ligand contact to GTP. Positions 48–52 (GITQH) are G2. A G3 region spans residues 87–90 (DTPG). Residues 87-91 (DTPGH) and 141-144 (NKID) contribute to the GTP site. The segment at 141-144 (NKID) is G4. The tract at residues 209–211 (SAR) is G5.

Belongs to the TRAFAC class translation factor GTPase superfamily. Classic translation factor GTPase family. IF-2 subfamily.

Its function is as follows. Function in general translation initiation by promoting the binding of the formylmethionine-tRNA to ribosomes. Seems to function along with eIF-2. The protein is Probable translation initiation factor IF-2 (infB) of Aeropyrum pernix (strain ATCC 700893 / DSM 11879 / JCM 9820 / NBRC 100138 / K1).